Reading from the N-terminus, the 138-residue chain is ATP synthase epsilon chain (138 aa).

It belongs to the ATPase epsilon chain family. As to quaternary structure, F-type ATPases have 2 components, CF(1) - the catalytic core - and CF(0) - the membrane proton channel. CF(1) has five subunits: alpha(3), beta(3), gamma(1), delta(1), epsilon(1). CF(0) has three main subunits: a, b and c.

The protein resides in the cell inner membrane. Its function is as follows. Produces ATP from ADP in the presence of a proton gradient across the membrane. The sequence is that of ATP synthase epsilon chain from Psychrobacter arcticus (strain DSM 17307 / VKM B-2377 / 273-4).